Reading from the N-terminus, the 291-residue chain is MDKSLLGKLRKETGFGFSKCREALVLARNDYAAAEAWLHEQAEKEGWQKANKLQGRSATEGLIGVIVNHSDMNLGAMVEVNCETDFVARNENFVDLVNTVTSTTLAYRRGIIQRNQKLNMFGDQVTHLREFILTHELSNLRVEHNNPDSMLLSDMVAKVIGKLGENIKLGKAITITTDSDNVIGSYVHGPYVTKVHQCSFGKYGAMVAVKPIKKGIDTSSLALLANKLAQHVVGMNPKVIGQGGEADEKGGESEALLDQEYLLDGSLTVGQFTEKEGVQVVDFVRYECGAK.

The protein belongs to the EF-Ts family.

It is found in the mitochondrion. Associates with the EF-Tu.GDP complex and induces the exchange of GDP to GTP. It remains bound to the aminoacyl-tRNA.EF-Tu.GTP complex up to the GTP hydrolysis stage on the ribosome. This chain is Elongation factor Ts, mitochondrial, found in Nematostella vectensis (Starlet sea anemone).